A 60-amino-acid chain; its full sequence is MAVQQNKKSRSARDMRRSHDALEASTLSVEKTTGEVHLRHHVSPEGVYRGRKVIDKGADE.

Positions 1 to 44 are disordered; that stretch reads MAVQQNKKSRSARDMRRSHDALEASTLSVEKTTGEVHLRHHVSP. The span at 11 to 22 shows a compositional bias: basic and acidic residues; the sequence is SARDMRRSHDAL.

It belongs to the bacterial ribosomal protein bL32 family.

The sequence is that of Large ribosomal subunit protein bL32 from Pseudomonas fluorescens (strain SBW25).